Consider the following 513-residue polypeptide: Glucose-1-phosphate adenylyltransferase small subunit, chloroplastic/amyloplastic (513 aa).

The transit peptide at 1–64 directs the protein to the chloroplast; sequence MAMAAAASPS…RRPFFFSPRA (64 aa).

It belongs to the bacterial/plant glucose-1-phosphate adenylyltransferase family. In terms of assembly, heterotetramer. As to expression, leaves and starchy endosperm.

It localises to the plastid. It is found in the chloroplast. The protein resides in the amyloplast. It carries out the reaction alpha-D-glucose 1-phosphate + ATP + H(+) = ADP-alpha-D-glucose + diphosphate. Its pathway is glycan biosynthesis; starch biosynthesis. Activated by 3'phosphoglycerate, inhibited by orthophosphate. Allosteric regulation. Its function is as follows. This protein plays a role in synthesis of starch. It catalyzes the synthesis of the activated glycosyl donor, ADP-glucose from Glc-1-P and ATP. The sequence is that of Glucose-1-phosphate adenylyltransferase small subunit, chloroplastic/amyloplastic from Hordeum vulgare (Barley).